A 375-amino-acid chain; its full sequence is uncharacterized protein (375 aa).

The protein belongs to the IMPDH/GMPR family.

This is an uncharacterized protein from Mycobacterium tuberculosis (strain CDC 1551 / Oshkosh).